The primary structure comprises 137 residues: Proofreading thioesterase EntH (137 aa).

Glu63 functions as the Nucleophile or proton acceptor in the catalytic mechanism.

The protein belongs to the thioesterase PaaI family. As to quaternary structure, homotetramer. Dimer of dimers. Interacts specifically with the aryl carrier protein (ArCP) domain of EntB.

It is found in the cytoplasm. It participates in siderophore biosynthesis; enterobactin biosynthesis. In terms of biological role, required for optimal enterobactin synthesis. Acts as a proofreading enzyme that prevents EntB misacylation by hydrolyzing the thioester bound existing between EntB and wrongly charged molecules. The sequence is that of Proofreading thioesterase EntH from Shigella sonnei (strain Ss046).